The sequence spans 61 residues: Large ribosomal subunit protein uL30 (61 aa).

It belongs to the universal ribosomal protein uL30 family. As to quaternary structure, part of the 50S ribosomal subunit.

In Lactobacillus delbrueckii subsp. bulgaricus (strain ATCC 11842 / DSM 20081 / BCRC 10696 / JCM 1002 / NBRC 13953 / NCIMB 11778 / NCTC 12712 / WDCM 00102 / Lb 14), this protein is Large ribosomal subunit protein uL30.